The following is a 329-amino-acid chain: Prostaglandin reductase 1 (329 aa).

The residue at position 18 (Thr-18) is a Phosphothreonine. A Phosphoserine modification is found at Ser-20. Residues Gly-152–Gly-155, Lys-178, Tyr-193, Asn-217, Cys-239–Tyr-245, Phe-270–Val-272, and Asn-321 each bind NADP(+). Lys-178 carries the N6-(2-hydroxyisobutyryl)lysine; alternate modification. Lys-178 is modified (N6-acetyllysine; alternate).

It belongs to the NADP-dependent oxidoreductase L4BD family. As to quaternary structure, monomer or homodimer.

The protein resides in the cytoplasm. The enzyme catalyses 13,14-dihydro-15-oxo-prostaglandin E1 + NADP(+) = 15-oxoprostaglandin E1 + NADPH + H(+). The catalysed reaction is 13,14-dihydro-15-oxo-prostaglandin E2 + NADP(+) = 15-oxoprostaglandin E2 + NADPH + H(+). It carries out the reaction 13,14-dihydro-15-oxo-prostaglandin F1alpha + NADP(+) = 15-oxoprostaglandin F1alpha + NADPH + H(+). It catalyses the reaction 13,14-dihydro-15-oxo-PGF2alpha + NADP(+) = 15-oxoprostaglandin F2alpha + NADPH + H(+). The enzyme catalyses leukotriene B4 + NADP(+) = 12-oxo-leukotriene B4 + NADPH + H(+). The catalysed reaction is 20-hydroxy-leukotriene B4 + NADP(+) = 12-oxo-20-hydroxy-leukotriene B4 + NADPH + H(+). It carries out the reaction 6-trans-leukotriene B4 + NADP(+) = 12-oxo-(5S)-hydroxy-(6E,8E,10E,14Z)-eicosatetraenoate + NADPH + H(+). It catalyses the reaction (5S,12S)-dihydroxy-(6E,10E,12E,14Z)-eicosatetraenoate + NADP(+) = 12-oxo-(5S)-hydroxy-(6E,8E,10E,14Z)-eicosatetraenoate + NADPH + H(+). The enzyme catalyses an n-alkanal + NADP(+) = an alk-2-enal + NADPH + H(+). The catalysed reaction is hexanal + NADP(+) = (E)-hex-2-enal + NADPH + H(+). It carries out the reaction octanal + NADP(+) = (2E)-octenal + NADPH + H(+). It catalyses the reaction decanal + NADP(+) = (2E)-decenal + NADPH + H(+). The enzyme catalyses dodecanal + NADP(+) = (2E)-dodecenal + NADPH + H(+). The catalysed reaction is 4-hydroxynonanal + NADP(+) = (E)-4-hydroxynon-2-enal + NADPH + H(+). It carries out the reaction pentan-2-one + NADP(+) = (E)-pent-3-en-2-one + NADPH + H(+). It catalyses the reaction nonan-2-one + NADP(+) = (3E)-nonen-2-one + NADPH + H(+). In terms of biological role, NAD(P)H-dependent oxidoreductase involved in metabolic inactivation of pro- and anti-inflammatory eicosanoids: prostaglandins (PG), leukotrienes (LT) and lipoxins (LX). Catalyzes with high efficiency the reduction of the 13,14 double bond of 15-oxoPGs, including 15-oxo-PGE1, 15-oxo-PGE2, 15-oxo-PGF1-alpha and 15-oxo-PGF2-alpha. Catalyzes with lower efficiency the oxidation of the hydroxyl group at C12 of LTB4 and its derivatives, converting them into biologically less active 12-oxo-LTB4 metabolites. Reduces 15-oxo-LXA4 to 13,14 dihydro-15-oxo-LXA4, enhancing neutrophil recruitment at the inflammatory site. Plays a role in metabolic detoxification of alkenals and ketones. Reduces alpha,beta-unsaturated alkenals and ketones, particularly those with medium-chain length, showing highest affinity toward (2E)-decenal and (3E)-3-nonen-2-one. Inactivates 4-hydroxy-2-nonenal, a cytotoxic lipid constituent of oxidized low-density lipoprotein particles. In Rattus norvegicus (Rat), this protein is Prostaglandin reductase 1 (Ptgr1).